A 492-amino-acid chain; its full sequence is Bifunctional protein GlmU (492 aa).

Positions 1-241 (MTFRGDTAVL…NALVAGVNNR (241 aa)) are pyrophosphorylase. Residues 12–15 (LAAG), Lys-26, Gln-83, 88–89 (GT), 112–114 (SGD), Gly-151, Glu-166, Asn-181, and Asn-239 contribute to the UDP-N-acetyl-alpha-D-glucosamine site. Residue Asp-114 participates in Mg(2+) binding. Position 239 (Asn-239) interacts with Mg(2+). Residues 242–262 (VQLAELSAELNRRIVATHQVA) form a linker region. Residues 263–492 (GVTIIDPATT…KQSQQKSEPD (230 aa)) are N-acetyltransferase. UDP-N-acetyl-alpha-D-glucosamine is bound by residues Arg-344 and Lys-362. His-374 functions as the Proton acceptor in the catalytic mechanism. Residues Tyr-377 and Asn-388 each contribute to the UDP-N-acetyl-alpha-D-glucosamine site. Residues Ala-391, 397-398 (NY), Ser-416, and Ala-434 each bind acetyl-CoA. The interval 461-492 (VQRKRPGSAAAQAAEKASTRTGKQSQQKSEPD) is disordered. A compositionally biased stretch (polar residues) spans 479-492 (TRTGKQSQQKSEPD).

It in the N-terminal section; belongs to the N-acetylglucosamine-1-phosphate uridyltransferase family. This sequence in the C-terminal section; belongs to the transferase hexapeptide repeat family. Homotrimer. It depends on Mg(2+) as a cofactor.

It localises to the cytoplasm. It carries out the reaction alpha-D-glucosamine 1-phosphate + acetyl-CoA = N-acetyl-alpha-D-glucosamine 1-phosphate + CoA + H(+). It catalyses the reaction N-acetyl-alpha-D-glucosamine 1-phosphate + UTP + H(+) = UDP-N-acetyl-alpha-D-glucosamine + diphosphate. The protein operates within nucleotide-sugar biosynthesis; UDP-N-acetyl-alpha-D-glucosamine biosynthesis; N-acetyl-alpha-D-glucosamine 1-phosphate from alpha-D-glucosamine 6-phosphate (route II): step 2/2. It participates in nucleotide-sugar biosynthesis; UDP-N-acetyl-alpha-D-glucosamine biosynthesis; UDP-N-acetyl-alpha-D-glucosamine from N-acetyl-alpha-D-glucosamine 1-phosphate: step 1/1. Its pathway is bacterial outer membrane biogenesis; LPS lipid A biosynthesis. In terms of biological role, catalyzes the last two sequential reactions in the de novo biosynthetic pathway for UDP-N-acetylglucosamine (UDP-GlcNAc). The C-terminal domain catalyzes the transfer of acetyl group from acetyl coenzyme A to glucosamine-1-phosphate (GlcN-1-P) to produce N-acetylglucosamine-1-phosphate (GlcNAc-1-P), which is converted into UDP-GlcNAc by the transfer of uridine 5-monophosphate (from uridine 5-triphosphate), a reaction catalyzed by the N-terminal domain. The protein is Bifunctional protein GlmU of Mycobacterium leprae (strain Br4923).